A 361-amino-acid chain; its full sequence is S-adenosylmethionine:tRNA ribosyltransferase-isomerase (361 aa).

It belongs to the QueA family. Monomer.

The protein localises to the cytoplasm. It catalyses the reaction 7-aminomethyl-7-carbaguanosine(34) in tRNA + S-adenosyl-L-methionine = epoxyqueuosine(34) in tRNA + adenine + L-methionine + 2 H(+). It functions in the pathway tRNA modification; tRNA-queuosine biosynthesis. Transfers and isomerizes the ribose moiety from AdoMet to the 7-aminomethyl group of 7-deazaguanine (preQ1-tRNA) to give epoxyqueuosine (oQ-tRNA). The protein is S-adenosylmethionine:tRNA ribosyltransferase-isomerase of Methylocella silvestris (strain DSM 15510 / CIP 108128 / LMG 27833 / NCIMB 13906 / BL2).